Consider the following 696-residue polypeptide: DNA ligase (696 aa).

NAD(+) is bound by residues 36–40 (DAEYD), 85–86 (SL), and glutamate 123. The active-site N6-AMP-lysine intermediate is lysine 125. NAD(+) contacts are provided by arginine 146, glutamate 181, lysine 319, and lysine 343. Cysteine 437, cysteine 440, cysteine 455, and cysteine 461 together coordinate Zn(2+). The region spanning 618-696 (PEGTSLAGKT…EDGLKALLGL (79 aa)) is the BRCT domain.

It belongs to the NAD-dependent DNA ligase family. LigA subfamily. Mg(2+) is required as a cofactor. Mn(2+) serves as cofactor.

The enzyme catalyses NAD(+) + (deoxyribonucleotide)n-3'-hydroxyl + 5'-phospho-(deoxyribonucleotide)m = (deoxyribonucleotide)n+m + AMP + beta-nicotinamide D-nucleotide.. In terms of biological role, DNA ligase that catalyzes the formation of phosphodiester linkages between 5'-phosphoryl and 3'-hydroxyl groups in double-stranded DNA using NAD as a coenzyme and as the energy source for the reaction. It is essential for DNA replication and repair of damaged DNA. This chain is DNA ligase, found in Bordetella parapertussis (strain 12822 / ATCC BAA-587 / NCTC 13253).